A 1167-amino-acid chain; its full sequence is mRNA 3'-end-processing protein rna-14 (1167 aa).

Positions 1 to 245 (MSDDYDPTNI…DPTPVTQPAP (245 aa)) are disordered. Composition is skewed to acidic residues over residues 16–26 (EEQEDYGEADG) and 70–79 (NTDDVGDDYD). Residues 102 to 111 (TAPQPAAPVA) are compositionally biased toward low complexity. A compositionally biased stretch (acidic residues) spans 124 to 137 (DSDDEDEDGDDDGE). Composition is skewed to low complexity over residues 138-150 (PQQQ…QQQP) and 159-191 (GSGA…PQTA). The segment covering 192-218 (TLTVQDNAGATTFNAPPVPQQVSHQSG) has biased composition (polar residues). Residues 219 to 245 (ATTAAVPTTPSSAAPAVDPTPVTQPAP) are compositionally biased toward low complexity. HAT repeat units lie at residues 277 to 309 (NDID…LELS), 311 to 342 (NNFP…YIRR), 352 to 387 (QARQ…FIKF), 401 to 434 (QKMD…FEMG), 471 to 504 (TNLP…WEKS), and 518 to 550 (LYQK…WCFD). Polar residues predominate over residues 882–893 (QQQPQLPMSQRD). Disordered stretches follow at residues 882–980 (QQQP…SGAG) and 1075–1167 (AYRE…PPPY). A compositionally biased stretch (low complexity) spans 908–922 (SPSAGPGAPFAPYAA). Residues 924 to 946 (RPLDDRDYDDHPRKIARSEHDPF) are compositionally biased toward basic and acidic residues. Residues 969 to 979 (GAAGAYSGSGA) show a composition bias toward gly residues. The segment covering 1079-1090 (SPGPLGGRPLSP) has biased composition (low complexity). A compositionally biased stretch (pro residues) spans 1121–1134 (EPPPAAQYGVPPPA). Residues 1135-1151 (QYDGGWAQQQQQQQYGQ) show a composition bias toward low complexity.

Its subcellular location is the nucleus. It is found in the cytoplasm. Functionally, component of the cleavage factor IA (CFIA) complex, which is involved in the endonucleolytic cleavage during polyadenylation-dependent pre-mRNA 3'-end formation. In Neurospora crassa (strain ATCC 24698 / 74-OR23-1A / CBS 708.71 / DSM 1257 / FGSC 987), this protein is mRNA 3'-end-processing protein rna-14 (rna-14).